Reading from the N-terminus, the 404-residue chain is Argininosuccinate synthase (404 aa).

ATP-binding positions include 9-17 and alanine 36; that span reads AYSGGLDTS. Residue tyrosine 87 participates in L-citrulline binding. Glycine 117 serves as a coordination point for ATP. 3 residues coordinate L-aspartate: threonine 119, asparagine 123, and aspartate 124. L-citrulline is bound at residue asparagine 123. Residues arginine 127, serine 176, and glutamate 261 each contribute to the L-citrulline site.

It belongs to the argininosuccinate synthase family. Type 1 subfamily. Homotetramer.

It localises to the cytoplasm. It catalyses the reaction L-citrulline + L-aspartate + ATP = 2-(N(omega)-L-arginino)succinate + AMP + diphosphate + H(+). It participates in amino-acid biosynthesis; L-arginine biosynthesis; L-arginine from L-ornithine and carbamoyl phosphate: step 2/3. The polypeptide is Argininosuccinate synthase (Burkholderia pseudomallei (strain K96243)).